The following is a 220-amino-acid chain: Regulatory protein VanRB (220 aa).

A Response regulatory domain is found at 4–117 (RILLVEDDDH…ILLKRVEALL (114 aa)). Position 53 is a 4-aspartylphosphate (Asp-53). The segment at residues 124-218 (AKEFRVGRLT…IRGVGYRLEE (95 aa)) is a DNA-binding region (ompR/PhoB-type).

In terms of processing, may be phosphorylated by VanSB. May also be dephosphorylated by VanSB.

It is found in the cytoplasm. Its function is as follows. Member of the two-component regulatory system VanSB/VanRB. Activates the transcription of vanSB, vanYB and vanW in response to vancomycin which results in vancomycin resistance. This is Regulatory protein VanRB (vanRB) from Enterococcus faecalis (strain ATCC 700802 / V583).